The sequence spans 397 residues: L-asparaginase-like protein GD25160 (397 aa).

Positions 1–22 are cleaved as a signal peptide; it reads MLAQSCCLRLLILLLLFTSICS. 3 disulfide bridges follow: Cys90/Cys95, Cys189/Cys205, and Cys344/Cys371.

The protein belongs to the Ntn-hydrolase family.

This chain is L-asparaginase-like protein GD25160, found in Drosophila simulans (Fruit fly).